We begin with the raw amino-acid sequence, 60 residues long: Metallothionein (60 aa).

Positions 1-28 are beta; sequence MDPCECSKTGNCTCGGSCTCKNCSCTSC. A divalent metal cation is bound by residues Cys-4, Cys-6, Cys-12, Cys-14, Cys-18, Cys-20, Cys-23, Cys-25, Cys-28, Cys-32, Cys-33, Cys-35, Cys-36, Cys-40, Cys-43, Cys-47, Cys-49, Cys-54, Cys-58, and Cys-59. The alpha stretch occupies residues 29 to 60; sequence KKSCCSCCPSGCSKCASGCVCKGKTCDTSCCQ.

Belongs to the metallothionein superfamily. Type 1 family.

Functionally, metallothioneins have a high content of cysteine residues that bind various heavy metals. This chain is Metallothionein (mt), found in Gobiomorphus cotidianus (New Zealand common bully).